A 420-amino-acid polypeptide reads, in one-letter code: D-tagatose-1,6-bisphosphate aldolase subunit GatZ (420 aa).

The protein belongs to the GatZ/KbaZ family. GatZ subfamily. As to quaternary structure, forms a complex with GatY.

It functions in the pathway carbohydrate metabolism; D-tagatose 6-phosphate degradation; D-glyceraldehyde 3-phosphate and glycerone phosphate from D-tagatose 6-phosphate: step 2/2. Component of the tagatose-1,6-bisphosphate aldolase GatYZ that is required for full activity and stability of the Y subunit. Could have a chaperone-like function for the proper and stable folding of GatY. When expressed alone, GatZ does not show any aldolase activity. Is involved in the catabolism of galactitol. This is D-tagatose-1,6-bisphosphate aldolase subunit GatZ from Escherichia coli (strain SE11).